We begin with the raw amino-acid sequence, 280 residues long: Putative pyruvate, phosphate dikinase regulatory protein 1 (280 aa).

152–159 (GVSRTSKT) contacts ADP.

It belongs to the pyruvate, phosphate/water dikinase regulatory protein family. PDRP subfamily.

The catalysed reaction is N(tele)-phospho-L-histidyl/L-threonyl-[pyruvate, phosphate dikinase] + ADP = N(tele)-phospho-L-histidyl/O-phospho-L-threonyl-[pyruvate, phosphate dikinase] + AMP + H(+). It carries out the reaction N(tele)-phospho-L-histidyl/O-phospho-L-threonyl-[pyruvate, phosphate dikinase] + phosphate + H(+) = N(tele)-phospho-L-histidyl/L-threonyl-[pyruvate, phosphate dikinase] + diphosphate. Bifunctional serine/threonine kinase and phosphorylase involved in the regulation of the pyruvate, phosphate dikinase (PPDK) by catalyzing its phosphorylation/dephosphorylation. The chain is Putative pyruvate, phosphate dikinase regulatory protein 1 from Latilactobacillus sakei subsp. sakei (strain 23K) (Lactobacillus sakei subsp. sakei).